Consider the following 115-residue polypeptide: NADH-ubiquinone oxidoreductase chain 3 (115 aa).

The next 3 membrane-spanning stretches (helical) occupy residues 3–23 (LIMV…VAFW), 55–75 (FFLV…LLPI), and 84–104 (INTM…GLAY).

Belongs to the complex I subunit 3 family. Core subunit of respiratory chain NADH dehydrogenase (Complex I) which is composed of 45 different subunits. Interacts with TMEM186. Interacts with TMEM242.

It localises to the mitochondrion inner membrane. It carries out the reaction a ubiquinone + NADH + 5 H(+)(in) = a ubiquinol + NAD(+) + 4 H(+)(out). Its function is as follows. Core subunit of the mitochondrial membrane respiratory chain NADH dehydrogenase (Complex I) which catalyzes electron transfer from NADH through the respiratory chain, using ubiquinone as an electron acceptor. Essential for the catalytic activity of complex I. This chain is NADH-ubiquinone oxidoreductase chain 3, found in Scotinomys teguina (Alston's brown mouse).